The following is a 506-amino-acid chain: Maturase K (506 aa).

The protein belongs to the intron maturase 2 family. MatK subfamily.

The protein localises to the plastid. Its subcellular location is the chloroplast. Functionally, usually encoded in the trnK tRNA gene intron. Probably assists in splicing its own and other chloroplast group II introns. This is Maturase K from Sullivantia sullivantii (Sullivant's coolwort).